Here is a 333-residue protein sequence, read N- to C-terminus: UDP-glucose 4-epimerase (333 aa).

NAD(+)-binding positions include 11–12 (YI), 32–37 (DSLVTG), 52–53 (DL), 75–79 (FAAYS), Asn94, Thr119, Tyr143, Lys147, and Phe171. Substrate is bound by residues Thr119 and Tyr143. The active-site Proton acceptor is Tyr143. Substrate contacts are provided by residues Asn172, 191 to 192 (HL), 208 to 210 (MIF), Arg223, and 284 to 287 (RSGD).

The protein belongs to the NAD(P)-dependent epimerase/dehydratase family. Homodimer. NAD(+) serves as cofactor.

The catalysed reaction is UDP-alpha-D-glucose = UDP-alpha-D-galactose. It participates in carbohydrate metabolism; galactose metabolism. Involved in the metabolism of galactose. Catalyzes the conversion of UDP-galactose (UDP-Gal) to UDP-glucose (UDP-Glc) through a mechanism involving the transient reduction of NAD. The protein is UDP-glucose 4-epimerase (galE) of Streptococcus mutans serotype c (strain ATCC 700610 / UA159).